The chain runs to 235 residues: Protein RESISTANCE TO PHYTOPHTHORA 1, chloroplastic (235 aa).

The N-terminal 43 residues, 1–43 (MNSATTMSASVLNYQILKFFPPQKNGFLKSPLIRGKICRFCVS), are a transit peptide targeting the chloroplast. Over residues 53-66 (VIEDPKEETQEKSD) the composition is skewed to basic and acidic residues. Residues 53–92 (VIEDPKEETQEKSDGVIVNSTEEEEERSGENSTSTGPSTV) form a disordered region. 4 helical membrane-spanning segments follow: residues 131–151 (FEVQ…NLIF), 158–178 (IWRL…LRAR), 188–208 (LNYL…FLKS), and 211–231 (VVWS…LGWL).

It localises to the plastid. The protein localises to the chloroplast. It is found in the membrane. In terms of biological role, plays a positive role in the immune response to the oomycetes P.infestans, including induced oxidative burst and enhanced expression of defense-related genes. The polypeptide is Protein RESISTANCE TO PHYTOPHTHORA 1, chloroplastic (Solanum tuberosum (Potato)).